A 663-amino-acid chain; its full sequence is MAVNEKDVGRKSRVSVVLWVFIALGTLFLCKNAFTFSSESIHGLKISSDDSDSVDIERQISLGLTPRKPVVITDLRTGNKRKLHGRFLHITDMHPDEYYVAGTSIDNVCHSGEPTKGKDRAAKFGNAMSGCDSPMLLMDMTLDWIDKNLKDQIDFVVWTGDNIRHDNDRTYPRTEDEIFRMNAEVAEKIKKIFRTPNSPDPRDFAVPVVPSIGNNDVFPHNLFSLGPTLQTREYYRLWGDFIPEEQQRMFDRDASFFTEVIPGKLAVLSFNTLYLFKANPLVDNCDSRKQPGYQLLLWLGYVLDEIRERGMKVWISGHVPPIAKNYDSSCYDKFSLWMHEYRDVIIGGLYGHMNMDHFVPVDVQAIRENMEEQQMSLLSEDERLTKTIREHAIAAREAHLMGAKPVNKESYLDGVLDTYYKGVLQEIEQAVDSDLDIEKKKKKKGKKKKGKKEKRTLEEIYDQHSIVQVSGSVIPTFNPSIRVWEYNISDITDSSSIFGENQLEYQSWDLFFEDLEHKMKNEFDDNESSFWAASAEQNKKKKKKNGKPDKSIPRKKPDELPAGPGHIQQLFSPTKFVQYFADLDSINSEYEKLIDKGLAEHDAINKAFNYEVEYTSKDEPYPMESLLVKDYLHLAADLARDNGLWKIFKERAFISTGYEDERN.

The Cytoplasmic portion of the chain corresponds to 1-14 (MAVNEKDVGRKSRV). A helical; Signal-anchor for type II membrane protein transmembrane segment spans residues 15–35 (SVVLWVFIALGTLFLCKNAFT). The Vacuolar portion of the chain corresponds to 36–663 (FSSESIHGLK…ISTGYEDERN (628 aa)). 2 N-linked (GlcNAc...) asparagine glycosylation sites follow: Asn487 and Asn526. The interval 534 to 564 (SAEQNKKKKKKNGKPDKSIPRKKPDELPAGP) is disordered. Residues 546-559 (GKPDKSIPRKKPDE) show a composition bias toward basic and acidic residues.

Belongs to the endopolyphosphatase PPN1 family. A divalent metal cation is required as a cofactor. Post-translationally, processing by proteases in the vacuole may be required for activation.

The protein localises to the vacuole membrane. The catalysed reaction is [phosphate](n+1) + n H2O = (n+1) phosphate + n H(+). In terms of biological role, catalyzes the hydrolysis of inorganic polyphosphate (polyP) chains of many hundreds of phosphate residues into shorter lengths. The polypeptide is Endopolyphosphatase (PPN1) (Candida glabrata (strain ATCC 2001 / BCRC 20586 / JCM 3761 / NBRC 0622 / NRRL Y-65 / CBS 138) (Yeast)).